The primary structure comprises 420 residues: MVEQDPFEIAVKQLERAAQYMKISEEALEFLKRPQRIVEVTIPVEMDDGSVKVFTGFRVQYNWARGPTKGGIRWHPEETLSTVKALAAWMTWKTAVMDLPYGGGKGGIIVDPKKLSDREKERLARGYIRAIYDVISPYEDIPAPDVYTNPQIMAWMMDEYETIARRKTPAFGIITGKPLSIGGSLGRNEATARGASYTIREAAKVLGWDDLKGKTIAIQGYGNAGYYLAKIMSEDYGMKVVAVSDSKGGIYNPDGLNADEVLKWKREHGSVKDFPGATNITNEELLELEVDVLAPAAIEEVITKKNADNIKAKIVAEVANGPVTPEADEILFEKGILQIPDFLCNAGGVTVSYFEWVQNITGYYWTLEEVREKLDKKMTKAFYDVYNTAKEKNIHMRDAAYVVAVQRVYQAMLDRGWVKH.

Residue Lys-105 is part of the active site. 220-226 is an NAD(+) binding site; sequence GYGNAGY.

It belongs to the Glu/Leu/Phe/Val dehydrogenases family. Homohexamer.

The protein resides in the cytoplasm. It catalyses the reaction L-glutamate + NAD(+) + H2O = 2-oxoglutarate + NH4(+) + NADH + H(+). It carries out the reaction L-glutamate + NADP(+) + H2O = 2-oxoglutarate + NH4(+) + NADPH + H(+). In Pyrococcus abyssi (strain GE5 / Orsay), this protein is Glutamate dehydrogenase (gdhA).